The following is a 289-amino-acid chain: ATP synthase gamma chain (289 aa).

Belongs to the ATPase gamma chain family. F-type ATPases have 2 components, CF(1) - the catalytic core - and CF(0) - the membrane proton channel. CF(1) has five subunits: alpha(3), beta(3), gamma(1), delta(1), epsilon(1). CF(0) has three main subunits: a, b and c.

It is found in the cell inner membrane. Functionally, produces ATP from ADP in the presence of a proton gradient across the membrane. The gamma chain is believed to be important in regulating ATPase activity and the flow of protons through the CF(0) complex. The protein is ATP synthase gamma chain of Halorhodospira halophila (strain DSM 244 / SL1) (Ectothiorhodospira halophila (strain DSM 244 / SL1)).